The sequence spans 122 residues: Truncated CrmB protein (122 aa).

Its function is as follows. The protein is truncated in this strain and presumably inactive. It has similarities with variola virus CrmB, but the product is inactivated due to several premature stop codons. The sequence is that of Truncated CrmB protein (OPG002) from Bos taurus (Bovine).